Consider the following 640-residue polypeptide: Lysophospholipase (640 aa).

Residues 1-25 (MWFLNSVNLLFLVCSVALHLDAVNA) form the signal peptide. A PLA2c domain is found at 38 to 589 (DCDENINLVR…EKYCWNGTVD (552 aa)). 15 N-linked (GlcNAc...) asparagine glycosylation sites follow: asparagine 84, asparagine 126, asparagine 163, asparagine 173, asparagine 218, asparagine 280, asparagine 310, asparagine 317, asparagine 348, asparagine 391, asparagine 492, asparagine 516, asparagine 544, asparagine 568, and asparagine 585. Positions 594–610 (ISSTTSSSASSTSTSDS) are enriched in low complexity. The disordered stretch occupies residues 594 to 616 (ISSTTSSSASSTSTSDSGNKENS).

Belongs to the lysophospholipase family. Highly glycosylated.

The protein resides in the secreted. The catalysed reaction is a 1-acyl-sn-glycero-3-phosphocholine + H2O = sn-glycerol 3-phosphocholine + a fatty acid + H(+). Catalyzes the release of fatty acids from lysophospholipids. At acidic pH the enzyme hydrolyzes all phospholipid substrates without metal ion. On the other hand, at alkaline pH the enzyme shows substrate specificity for phosphatidylcholine and lysophosphatidylcholine and requires Ca(2+), Fe(3+), or Al(3+) for the activity. This Kluyveromyces lactis (strain ATCC 8585 / CBS 2359 / DSM 70799 / NBRC 1267 / NRRL Y-1140 / WM37) (Yeast) protein is Lysophospholipase (PLB).